The sequence spans 406 residues: Tyrosine--tRNA ligase (406 aa).

Y35 provides a ligand contact to L-tyrosine. A 'HIGH' region motif is present at residues 40-49 (PTGPSLHIGH). Positions 168 and 172 each coordinate L-tyrosine. The 'KMSKS' region signature appears at 228–232 (KMGKS). K231 provides a ligand contact to ATP. An S4 RNA-binding domain is found at 339-405 (IGIIDLFAEA…GKKRFMRIIF (67 aa)).

Belongs to the class-I aminoacyl-tRNA synthetase family. TyrS type 1 subfamily. As to quaternary structure, homodimer.

The protein localises to the cytoplasm. It carries out the reaction tRNA(Tyr) + L-tyrosine + ATP = L-tyrosyl-tRNA(Tyr) + AMP + diphosphate + H(+). Functionally, catalyzes the attachment of tyrosine to tRNA(Tyr) in a two-step reaction: tyrosine is first activated by ATP to form Tyr-AMP and then transferred to the acceptor end of tRNA(Tyr). The polypeptide is Tyrosine--tRNA ligase (Treponema denticola (strain ATCC 35405 / DSM 14222 / CIP 103919 / JCM 8153 / KCTC 15104)).